A 539-amino-acid chain; its full sequence is Membrane protein insertase YidC (539 aa).

The chain crosses the membrane as a helical span at residues 6 to 26 (NILLIALALVSFLLFQQWNVA). Positions 35-44 (EQAQSGSTLP) are enriched in polar residues. The disordered stretch occupies residues 35–55 (EQAQSGSTLPAPSYADDLDPA). 4 helical membrane-spanning segments follow: residues 341–361 (SFIQ…TFIV), 416–436 (LGGC…YWAL), 454–474 (LSAQ…MFLI), and 495–515 (PVMF…YWLV).

Belongs to the OXA1/ALB3/YidC family. Type 1 subfamily. Interacts with the Sec translocase complex via SecD. Specifically interacts with transmembrane segments of nascent integral membrane proteins during membrane integration.

It is found in the cell inner membrane. Functionally, required for the insertion and/or proper folding and/or complex formation of integral membrane proteins into the membrane. Involved in integration of membrane proteins that insert both dependently and independently of the Sec translocase complex, as well as at least some lipoproteins. Aids folding of multispanning membrane proteins. In Vibrio atlanticus (strain LGP32) (Vibrio splendidus (strain Mel32)), this protein is Membrane protein insertase YidC.